We begin with the raw amino-acid sequence, 254 residues long: Chaperone protein PmfD (254 aa).

A signal peptide spans 1–26 (MNSFSTLKTLFCGSLLALSLVNTTQA).

It belongs to the periplasmic pilus chaperone family.

Its subcellular location is the periplasm. Functionally, involved in the biogenesis of the PMF fimbria. The protein is Chaperone protein PmfD (pmfD) of Proteus mirabilis (strain HI4320).